The sequence spans 229 residues: High molecular weight rubredoxin (229 aa).

A flavodoxin-reductase-like region spans residues 1–158 (MDTKALHTLT…YYHQVKRGTT (158 aa)). The region spanning 178 to 229 (SPKYQCTICNYVYDPVQGDPEHGIAPGTPFADLPEDWTCPICGAGKDAFEQI) is the Rubredoxin-like domain. C183, C186, C216, and C219 together coordinate Fe cation.

It in the N-terminal section; belongs to the flavodoxin reductase family. Homodimer. Fe cation serves as cofactor. It depends on FMN as a cofactor.

Has nitric oxide reductase activity in combination with FprA; probably involved in nitrosative stress protection. Acts as an NADH:FprA oxidoreductase. In Moorella thermoacetica (strain ATCC 39073 / JCM 9320), this protein is High molecular weight rubredoxin (hrb).